A 255-amino-acid chain; its full sequence is Pimeloyl-[acyl-carrier protein] methyl ester esterase (255 aa).

An AB hydrolase-1 domain is found at 16–242 (LVLLHGWGLN…AAHAPFISHP (227 aa)). Substrate is bound by residues W22, 82 to 83 (SL), and 143 to 147 (FLALQ). The active-site Nucleophile is S82. Active-site residues include D207 and H235. H235 serves as a coordination point for substrate.

Belongs to the AB hydrolase superfamily. Carboxylesterase BioH family. Monomer.

The protein resides in the cytoplasm. The enzyme catalyses 6-carboxyhexanoyl-[ACP] methyl ester + H2O = 6-carboxyhexanoyl-[ACP] + methanol + H(+). The protein operates within cofactor biosynthesis; biotin biosynthesis. Functionally, the physiological role of BioH is to remove the methyl group introduced by BioC when the pimeloyl moiety is complete. It allows to synthesize pimeloyl-ACP via the fatty acid synthetic pathway through the hydrolysis of the ester bonds of pimeloyl-ACP esters. This is Pimeloyl-[acyl-carrier protein] methyl ester esterase from Pectobacterium atrosepticum (strain SCRI 1043 / ATCC BAA-672) (Erwinia carotovora subsp. atroseptica).